The chain runs to 609 residues: ATP-dependent lipid A-core flippase (609 aa).

The next 6 helical transmembrane spans lie at Leu-47–Ile-67, Ile-88–Phe-108, Ala-167–Val-187, Trp-190–Ile-210, Val-279–Gly-299, and Gly-305–Leu-325. The ABC transmembrane type-1 domain occupies Leu-47–Lys-340. One can recognise an ABC transporter domain in the interval Val-372 to Ser-606. Gly-404–Thr-411 is a binding site for ATP.

It belongs to the ABC transporter superfamily. Lipid exporter (TC 3.A.1.106) family. In terms of assembly, homodimer.

It localises to the cell inner membrane. The enzyme catalyses ATP + H2O + lipid A-core oligosaccharideSide 1 = ADP + phosphate + lipid A-core oligosaccharideSide 2.. In terms of biological role, involved in lipopolysaccharide (LPS) biosynthesis. Translocates lipid A-core from the inner to the outer leaflet of the inner membrane. Transmembrane domains (TMD) form a pore in the inner membrane and the ATP-binding domain (NBD) is responsible for energy generation. The sequence is that of ATP-dependent lipid A-core flippase from Francisella tularensis subsp. tularensis (strain FSC 198).